A 238-amino-acid chain; its full sequence is Small ribosomal subunit protein eS4 (238 aa).

The region spanning 38 to 109 (IPLALVIRDV…DERSYYALVP (72 aa)) is the S4 RNA-binding domain.

This sequence belongs to the eukaryotic ribosomal protein eS4 family.

This chain is Small ribosomal subunit protein eS4, found in Pyrobaculum neutrophilum (strain DSM 2338 / JCM 9278 / NBRC 100436 / V24Sta) (Thermoproteus neutrophilus).